Consider the following 771-residue polypeptide: DNA polymerase 1 (771 aa).

It belongs to the DNA polymerase type-B family.

It catalyses the reaction DNA(n) + a 2'-deoxyribonucleoside 5'-triphosphate = DNA(n+1) + diphosphate. The protein is DNA polymerase 1 (polI) of Pyrococcus abyssi.